Reading from the N-terminus, the 458-residue chain is Phenylalanine-specific permease (458 aa).

Residues 1 to 27 (MKNASTVSEDTASNQEPTLHRGLHNRH) lie on the Cytoplasmic side of the membrane. A helical transmembrane segment spans residues 28–48 (IQLIALGGAIGTGLFLGIGPA). The Periplasmic segment spans residues 49 to 50 (IQ). A helical transmembrane segment spans residues 51-71 (MAGPAVLLGYGVAGIIAFLIM). Residues 72–105 (RQLGEMVVEEPVSGSFAHFAYKYWGPFAGFLSGW) lie on the Cytoplasmic side of the membrane. The chain crosses the membrane as a helical span at residues 106-126 (NYWVMFVLVGMAELTAAGIYM). Topologically, residues 127–132 (QYWFPD) are periplasmic. The helical transmembrane segment at 133–153 (VPTWIWAAAFFIIINAVNLVN) threads the bilayer. Over 154–160 (VRLYGET) the chain is Cytoplasmic. The helical transmembrane segment at 161-181 (EFWFALIKVLAIIGMIGFGLW) threads the bilayer. The Periplasmic segment spans residues 182–196 (LLFSGHGGEKASIDN). Residues 197-217 (LWRYGGFFATGWNGLILSLAV) traverse the membrane as a helical segment. Topologically, residues 218–250 (IMFSFGGLELIGITAAEARDPEKSIPKAVNQVV) are cytoplasmic. Residues 251–271 (YRILLFYIGSLVVLLALYPWV) form a helical membrane-spanning segment. At 272-288 (EVKSNSSPFVMIFHNLD) the chain is on the periplasmic side. The chain crosses the membrane as a helical span at residues 289–309 (SNVVASALNFVILVASLSVYN). The Cytoplasmic segment spans residues 310–341 (SGVYSNSRMLFGLSVQGNAPKFLTRVSRRGVP). Residues 342–362 (INSLMLSGAITSLVVLINYLL) traverse the membrane as a helical segment. Topologically, residues 363 to 367 (PQKAF) are periplasmic. Residues 368 to 388 (GLLMALVVATLLLNWIMICLA) traverse the membrane as a helical segment. At 389-411 (HLRFRAAMRRQGRETQFKALLYP) the chain is on the cytoplasmic side. Residues 412–432 (FGNYLCIAFLGMILLLMCTMD) form a helical membrane-spanning segment. Topologically, residues 433–434 (DM) are periplasmic. The helical transmembrane segment at 435 to 455 (RLSAILLPVWIVFLFMAFKTL) threads the bilayer. At 456-458 (RRK) the chain is on the cytoplasmic side.

It belongs to the amino acid-polyamine-organocation (APC) superfamily. Amino acid transporter (AAT) (TC 2.A.3.1) family.

It is found in the cell inner membrane. It catalyses the reaction L-phenylalanine(in) + H(+)(in) = L-phenylalanine(out) + H(+)(out). In terms of biological role, permease that is involved in the active transport across the cytoplasmic membrane of phenylalanine. Can also transport tyrosine, but not tryptophan. This chain is Phenylalanine-specific permease, found in Escherichia coli (strain K12).